The sequence spans 140 residues: Nucleoside diphosphate kinase (140 aa).

Positions 11, 59, 87, 93, 104, and 114 each coordinate ATP. Residue His-117 is the Pros-phosphohistidine intermediate of the active site.

Belongs to the NDK family. As to quaternary structure, homotetramer. It depends on Mg(2+) as a cofactor.

The protein localises to the cytoplasm. The enzyme catalyses a 2'-deoxyribonucleoside 5'-diphosphate + ATP = a 2'-deoxyribonucleoside 5'-triphosphate + ADP. It carries out the reaction a ribonucleoside 5'-diphosphate + ATP = a ribonucleoside 5'-triphosphate + ADP. Its function is as follows. Major role in the synthesis of nucleoside triphosphates other than ATP. The ATP gamma phosphate is transferred to the NDP beta phosphate via a ping-pong mechanism, using a phosphorylated active-site intermediate. This chain is Nucleoside diphosphate kinase, found in Francisella tularensis subsp. mediasiatica (strain FSC147).